A 175-amino-acid polypeptide reads, in one-letter code: NADH-ubiquinone oxidoreductase chain 6 (175 aa).

6 helical membrane passes run 1-21 (MMTYVVFILSIVFVIGLIGSP), 25-45 (SPIYGGLGLIVSGGAGCGMVL), 47-67 (FGGSFLGLMVFLVYLGGMLVV), 88-108 (VVLGAFLLGLMMEFLAVLYVL), 115-137 (LVFKFSGLGDWVVYGMSDFGVFS), and 149-169 (YGVWLVVVTGWSLFVGVVVIM).

The protein belongs to the complex I subunit 6 family. As to quaternary structure, core subunit of respiratory chain NADH dehydrogenase (Complex I) which is composed of 45 different subunits.

It is found in the mitochondrion inner membrane. It carries out the reaction a ubiquinone + NADH + 5 H(+)(in) = a ubiquinol + NAD(+) + 4 H(+)(out). In terms of biological role, core subunit of the mitochondrial membrane respiratory chain NADH dehydrogenase (Complex I) which catalyzes electron transfer from NADH through the respiratory chain, using ubiquinone as an electron acceptor. Essential for the catalytic activity and assembly of complex I. This is NADH-ubiquinone oxidoreductase chain 6 (MT-ND6) from Hippopotamus amphibius (Hippopotamus).